The following is a 142-amino-acid chain: Large ribosomal subunit protein uL13 (142 aa).

This sequence belongs to the universal ribosomal protein uL13 family. Part of the 50S ribosomal subunit.

In terms of biological role, this protein is one of the early assembly proteins of the 50S ribosomal subunit, although it is not seen to bind rRNA by itself. It is important during the early stages of 50S assembly. The polypeptide is Large ribosomal subunit protein uL13 (Psychrobacter sp. (strain PRwf-1)).